A 157-amino-acid chain; its full sequence is S-ribosylhomocysteine lyase (157 aa).

Residues His54, His58, and Cys126 each coordinate Fe cation.

The protein belongs to the LuxS family. As to quaternary structure, homodimer. Requires Fe cation as cofactor.

It catalyses the reaction S-(5-deoxy-D-ribos-5-yl)-L-homocysteine = (S)-4,5-dihydroxypentane-2,3-dione + L-homocysteine. Functionally, involved in the synthesis of autoinducer 2 (AI-2) which is secreted by bacteria and is used to communicate both the cell density and the metabolic potential of the environment. The regulation of gene expression in response to changes in cell density is called quorum sensing. Catalyzes the transformation of S-ribosylhomocysteine (RHC) to homocysteine (HC) and 4,5-dihydroxy-2,3-pentadione (DPD). The chain is S-ribosylhomocysteine lyase from Bacillus cereus (strain 03BB102).